A 254-amino-acid polypeptide reads, in one-letter code: Cell division protein FtsQ (254 aa).

The Cytoplasmic segment spans residues 1 to 27 (MNILKRKTPQNIRFGEQKPKYYFHIRA). Residues 28–48 (FAVLLGVFFLLGVYFNWQSIL) traverse the membrane as a helical segment. Topologically, residues 49–254 (EKMDDKPISA…AGAAVGMVDR (206 aa)) are periplasmic. Residues 54 to 124 (KPISAFALVG…NRLSIWVSEY (71 aa)) enclose the POTRA domain.

The protein belongs to the FtsQ/DivIB family. FtsQ subfamily. Part of a complex composed of FtsB, FtsL and FtsQ.

Its subcellular location is the cell inner membrane. In terms of biological role, essential cell division protein. May link together the upstream cell division proteins, which are predominantly cytoplasmic, with the downstream cell division proteins, which are predominantly periplasmic. May control correct divisome assembly. The sequence is that of Cell division protein FtsQ from Haemophilus influenzae (strain ATCC 51907 / DSM 11121 / KW20 / Rd).